Here is a 71-residue protein sequence, read N- to C-terminus: Small ribosomal subunit protein bS21 (71 aa).

Positions 48-59 (AKASAVKRHAKK) are enriched in basic residues. The segment at 48-71 (AKASAVKRHAKKLSRENARRIRLY) is disordered. The segment covering 60–71 (LSRENARRIRLY) has biased composition (basic and acidic residues).

This sequence belongs to the bacterial ribosomal protein bS21 family.

This chain is Small ribosomal subunit protein bS21, found in Aeromonas hydrophila subsp. hydrophila (strain ATCC 7966 / DSM 30187 / BCRC 13018 / CCUG 14551 / JCM 1027 / KCTC 2358 / NCIMB 9240 / NCTC 8049).